The chain runs to 317 residues: Apolipoprotein E (317 aa).

A signal peptide spans 1–18; it reads MKVLWAALLVTFLAGCQA. 8 tandem repeats follow at residues 80–101, 102–123, 124–145, 146–167, 168–189, 190–211, 212–233, and 234–255. The interval 80-255 is 8 X 22 AA approximate tandem repeats; that stretch reads ALMDETMKEL…RLDEVKEQVA (176 aa). A Methionine sulfoxide modification is found at Met143. Ser147 is modified (phosphoserine). The tract at residues 158–168 is LDL and other lipoprotein receptors binding; that stretch reads HLRKLRKRLLR. Residue 162-165 coordinates heparin; sequence LRKR. The tract at residues 210–290 is lipid-binding and lipoprotein association; sequence AATVGSVAGK…SWFEPLVEDM (81 aa). 229 to 236 serves as a coordination point for heparin; sequence GERLRARM. The interval 266 to 317 is homooligomerization; the sequence is QQIRLQAEAFQARLKSWFEPLVEDMQRQWAGLVEKVQAAVGTSAAPVPSDNH. The segment at 278 to 290 is specificity for association with VLDL; that stretch reads RLKSWFEPLVEDM.

It belongs to the apolipoprotein A1/A4/E family. In terms of assembly, homotetramer. May interact with ABCA1; functionally associated with ABCA1 in the biogenesis of HDLs. May interact with APP/A4 amyloid-beta peptide; the interaction is extremely stable in vitro but its physiological significance is unclear. May interact with MAPT. May interact with MAP2. In the cerebrospinal fluid, interacts with secreted SORL1. Interacts with PMEL; this allows the loading of PMEL luminal fragment on ILVs to induce fibril nucleation. In terms of processing, APOE exists as multiple glycosylated and sialylated glycoforms within cells and in plasma. The extent of glycosylation and sialylation are tissue and context specific. Glycated in plasma VLDL. Post-translationally, phosphorylated by FAM20C in the extracellular medium.

The protein localises to the secreted. It is found in the extracellular space. It localises to the extracellular matrix. The protein resides in the extracellular vesicle. Its subcellular location is the endosome. The protein localises to the multivesicular body. APOE is an apolipoprotein, a protein associating with lipid particles, that mainly functions in lipoprotein-mediated lipid transport between organs via the plasma and interstitial fluids. APOE is a core component of plasma lipoproteins and is involved in their production, conversion and clearance. Apolipoproteins are amphipathic molecules that interact both with lipids of the lipoprotein particle core and the aqueous environment of the plasma. As such, APOE associates with chylomicrons, chylomicron remnants, very low density lipoproteins (VLDL) and intermediate density lipoproteins (IDL) but shows a preferential binding to high-density lipoproteins (HDL). It also binds a wide range of cellular receptors including the LDL receptor/LDLR, the LDL receptor-related proteins LRP1, LRP2 and LRP8 and the very low-density lipoprotein receptor/VLDLR that mediate the cellular uptake of the APOE-containing lipoprotein particles. Finally, APOE also has a heparin-binding activity and binds heparan-sulfate proteoglycans on the surface of cells, a property that supports the capture and the receptor-mediated uptake of APOE-containing lipoproteins by cells. A main function of APOE is to mediate lipoprotein clearance through the uptake of chylomicrons, VLDLs, and HDLs by hepatocytes. APOE is also involved in the biosynthesis by the liver of VLDLs as well as their uptake by peripheral tissues ensuring the delivery of triglycerides and energy storage in muscle, heart and adipose tissues. By participating in the lipoprotein-mediated distribution of lipids among tissues, APOE plays a critical role in plasma and tissues lipid homeostasis. APOE is also involved in two steps of reverse cholesterol transport, the HDLs-mediated transport of cholesterol from peripheral tissues to the liver, and thereby plays an important role in cholesterol homeostasis. First, it is functionally associated with ABCA1 in the biogenesis of HDLs in tissues. Second, it is enriched in circulating HDLs and mediates their uptake by hepatocytes. APOE also plays an important role in lipid transport in the central nervous system, regulating neuron survival and sprouting. In Pongo pygmaeus (Bornean orangutan), this protein is Apolipoprotein E (APOE).